The primary structure comprises 701 residues: Elongation factor G (701 aa).

The region spanning 8-290 is the tr-type G domain; the sequence is ERYRNIGISA…AVVDYLPAPT (283 aa). GTP-binding positions include 17–24, 88–92, and 142–145; these read AHIDAGKT, DTPGH, and NKMD.

This sequence belongs to the TRAFAC class translation factor GTPase superfamily. Classic translation factor GTPase family. EF-G/EF-2 subfamily.

The protein localises to the cytoplasm. In terms of biological role, catalyzes the GTP-dependent ribosomal translocation step during translation elongation. During this step, the ribosome changes from the pre-translocational (PRE) to the post-translocational (POST) state as the newly formed A-site-bound peptidyl-tRNA and P-site-bound deacylated tRNA move to the P and E sites, respectively. Catalyzes the coordinated movement of the two tRNA molecules, the mRNA and conformational changes in the ribosome. This Aeromonas hydrophila subsp. hydrophila (strain ATCC 7966 / DSM 30187 / BCRC 13018 / CCUG 14551 / JCM 1027 / KCTC 2358 / NCIMB 9240 / NCTC 8049) protein is Elongation factor G.